Here is a 1501-residue protein sequence, read N- to C-terminus: Protein SNQ2 (1501 aa).

Residues 1 to 17 (MSNIKSTQDSSHNAVAR) are compositionally biased toward polar residues. Residues 1-56 (MSNIKSTQDSSHNAVARSSSASFAASEESFTGITHDKDEQSDTPADKLTKMLTGPA) are disordered. Position 2 is an N-acetylserine (Ser-2). Low complexity predominate over residues 18-30 (SSSASFAASEESF). Residues Ser-26 and Ser-29 each carry the phosphoserine modification. Residues 34 to 49 (THDKDEQSDTPADKLT) are compositionally biased toward basic and acidic residues. 3 positions are modified to phosphoserine: Ser-64, Ser-80, and Ser-86. The region spanning 161–410 (FKGIKAKRHQ…FAKMGYLCPP (250 aa)) is the ABC transporter 1 domain. N-linked (GlcNAc...) asparagine glycosylation is found at Asn-273, Asn-334, and Asn-518. A run of 5 helical transmembrane segments spans residues 521-541 (YTVI…SLFY), 554-574 (GGVL…NISF), 600-620 (LASF…LFFL), 628-648 (GSFF…NGLF), and 664-680 (ISGI…TYMI). The N-linked (GlcNAc...) asparagine glycan is linked to Asn-730. Residues 771–789 (FGILWCFLLGYVVLKVIFT) traverse the membrane as a helical segment. Residues 853–1095 (FIWKDVCFTI…ILNYFERNGA (243 aa)) enclose the ABC transporter 2 domain. Asn-874 carries N-linked (GlcNAc...) asparagine glycosylation. 889–896 (GESGAGKT) is a binding site for ATP. Thr-1153 carries the post-translational modification Phosphothreonine. 4 helical membrane-spanning segments follow: residues 1190 to 1212 (IMSK…FNVG), 1216 to 1236 (VGLQ…APAM), 1277 to 1296 (HLFF…RIFF), and 1333 to 1352 (ANVI…GVTQ). Residue Asn-1401 is glycosylated (N-linked (GlcNAc...) asparagine). A helical membrane pass occupies residues 1455–1475 (FGIFWIYIFFNIIAMVCVYYL).

This sequence belongs to the ABC transporter superfamily. ABCG family. PDR (TC 3.A.1.205) subfamily.

Its subcellular location is the membrane. Its function is as follows. Could be an ATP-dependent permease. Confers hyper-resistance to the mutagens 4-nitroquinoline-N-oxide (4-NQO) and triaziquone, as well as to the chemicals sulphomethuron methyl phenanthroline when present in multiple copies. Exhibits nucleoside triphosphatase activity. This Saccharomyces cerevisiae (strain ATCC 204508 / S288c) (Baker's yeast) protein is Protein SNQ2 (SNQ2).